The following is a 585-amino-acid chain: Trehalase (585 aa).

A signal peptide spans 1–32; that stretch reads MAKTTPMAKPSVGLLTLQVLVFCALTGSLASA. Substrate-binding positions include Arg184 and 191 to 192; that span reads WD. Residue Asn207 is glycosylated (N-linked (GlcNAc...) asparagine). Substrate-binding positions include Asn228, 237 to 239, 302 to 304, and Gly336; these read RSQ and RPE. Asp338 serves as the catalytic Proton donor/acceptor. Residue Asn348 is glycosylated (N-linked (GlcNAc...) asparagine). Glu535 acts as the Proton donor/acceptor in catalysis. Substrate is bound at residue Glu550.

This sequence belongs to the glycosyl hydrolase 37 family. Expressed by the venom gland.

It localises to the secreted. It carries out the reaction alpha,alpha-trehalose + H2O = alpha-D-glucose + beta-D-glucose. The polypeptide is Trehalase (tre1) (Pimpla hypochondriaca (Parasitoid wasp)).